Consider the following 493-residue polypeptide: Glutamate--tRNA ligase (493 aa).

The short motif at 10-20 is the 'HIGH' region element; sequence PSPTGDPHVGT. The 'KMSKS' region signature appears at 251–255; the sequence is KLSKR. Lys-254 serves as a coordination point for ATP.

It belongs to the class-I aminoacyl-tRNA synthetase family. Glutamate--tRNA ligase type 1 subfamily. In terms of assembly, monomer.

It is found in the cytoplasm. The enzyme catalyses tRNA(Glu) + L-glutamate + ATP = L-glutamyl-tRNA(Glu) + AMP + diphosphate. In terms of biological role, catalyzes the attachment of glutamate to tRNA(Glu) in a two-step reaction: glutamate is first activated by ATP to form Glu-AMP and then transferred to the acceptor end of tRNA(Glu). The sequence is that of Glutamate--tRNA ligase from Pseudomonas savastanoi pv. phaseolicola (strain 1448A / Race 6) (Pseudomonas syringae pv. phaseolicola (strain 1448A / Race 6)).